Reading from the N-terminus, the 429-residue chain is Threonine synthase (429 aa).

Lysine 108 carries the post-translational modification N6-(pyridoxal phosphate)lysine.

This sequence belongs to the threonine synthase family. Requires pyridoxal 5'-phosphate as cofactor.

The enzyme catalyses O-phospho-L-homoserine + H2O = L-threonine + phosphate. It participates in amino-acid biosynthesis; L-threonine biosynthesis; L-threonine from L-aspartate: step 5/5. Its function is as follows. Catalyzes the gamma-elimination of phosphate from L-phosphohomoserine and the beta-addition of water to produce L-threonine. The protein is Threonine synthase (thrC) of Buchnera aphidicola subsp. Schizaphis graminum (strain Sg).